The sequence spans 95 residues: Progonadoliberin-1 (95 aa).

The first 22 residues, 1–22 (MAPQTFALWLLLVGTLLGQGCC), serve as a signal peptide directing secretion. Residue Gln23 is modified to Pyrrolidone carboxylic acid. At Gly32 the chain carries Glycine amide.

The protein belongs to the GnRH family.

Its subcellular location is the secreted. Stimulates the secretion of gonadotropins. The chain is Progonadoliberin-1 (gnrh1) from Morone saxatilis (Striped bass).